The primary structure comprises 533 residues: CTP synthase (533 aa).

Residues 1–264 (MKYIFVTGGV…GKLVTEKLNL (264 aa)) are amidoligase domain. S12 contributes to the CTP binding site. UTP is bound at residue S12. Residues 13–18 (SLGKGI) and D70 contribute to the ATP site. Mg(2+) contacts are provided by D70 and E138. Residues 145–147 (DIE), 185–190 (KTKPTQ), and K221 contribute to the CTP site. UTP-binding positions include 185–190 (KTKPTQ) and K221. Residue 237 to 239 (KDA) coordinates ATP. One can recognise a Glutamine amidotransferase type-1 domain in the interval 289 to 533 (TIGIVGKYIE…HGLVKASIEK (245 aa)). G357 contributes to the L-glutamine binding site. The Nucleophile; for glutamine hydrolysis role is filled by C384. L-glutamine contacts are provided by residues 385 to 388 (LGMQ), E407, and R464. Active-site residues include H509 and E511.

The protein belongs to the CTP synthase family. As to quaternary structure, homotetramer.

It catalyses the reaction UTP + L-glutamine + ATP + H2O = CTP + L-glutamate + ADP + phosphate + 2 H(+). It carries out the reaction L-glutamine + H2O = L-glutamate + NH4(+). The catalysed reaction is UTP + NH4(+) + ATP = CTP + ADP + phosphate + 2 H(+). Its pathway is pyrimidine metabolism; CTP biosynthesis via de novo pathway; CTP from UDP: step 2/2. Allosterically activated by GTP, when glutamine is the substrate; GTP has no effect on the reaction when ammonia is the substrate. The allosteric effector GTP functions by stabilizing the protein conformation that binds the tetrahedral intermediate(s) formed during glutamine hydrolysis. Inhibited by the product CTP, via allosteric rather than competitive inhibition. Its function is as follows. Catalyzes the ATP-dependent amination of UTP to CTP with either L-glutamine or ammonia as the source of nitrogen. Regulates intracellular CTP levels through interactions with the four ribonucleotide triphosphates. The sequence is that of CTP synthase from Methanococcus maripaludis (strain DSM 14266 / JCM 13030 / NBRC 101832 / S2 / LL).